Consider the following 351-residue polypeptide: Methylthioribose-1-phosphate isomerase (351 aa).

Substrate contacts are provided by residues arginine 51–alanine 53, arginine 94, and glutamine 199. Aspartate 240 serves as the catalytic Proton donor. Residue asparagine 250–lysine 251 participates in substrate binding.

It belongs to the EIF-2B alpha/beta/delta subunits family. MtnA subfamily. In terms of assembly, homodimer.

It carries out the reaction 5-(methylsulfanyl)-alpha-D-ribose 1-phosphate = 5-(methylsulfanyl)-D-ribulose 1-phosphate. Its pathway is amino-acid biosynthesis; L-methionine biosynthesis via salvage pathway; L-methionine from S-methyl-5-thio-alpha-D-ribose 1-phosphate: step 1/6. Catalyzes the interconversion of methylthioribose-1-phosphate (MTR-1-P) into methylthioribulose-1-phosphate (MTRu-1-P). The sequence is that of Methylthioribose-1-phosphate isomerase from Bacillus anthracis.